The following is a 630-amino-acid chain: Plastin-1 (630 aa).

Methionine 1 carries the post-translational modification N-acetylmethionine. EF-hand domains lie at 11-46 and 51-86; these read EELE…ASLP and KVRE…LKSK. Ca(2+) contacts are provided by aspartate 24, aspartate 26, serine 28, tyrosine 30, glutamate 35, aspartate 64, asparagine 66, aspartate 68, lysine 70, and glutamate 75. Actin-binding stretches follow at residues 108 to 381 and 382 to 626; these read TSSI…CLHK and PDNN…GKGL. Calponin-homology (CH) domains are found at residues 122–238, 266–377, 396–505, and 517–626; these read EEEK…KVGL, LSPE…NTYP, SKEE…RRYT, and KVTD…GKGL.

In terms of assembly, monomer. In terms of processing, phosphorylated. In terms of tissue distribution, in the inner ear, it is expressed in the organ of Corti. Abundant in the utricle (at protein level).

Its subcellular location is the cytoplasm. The protein resides in the cell projection. It is found in the stereocilium. In terms of biological role, actin-bundling protein. In the inner ear, it is required for stereocilia formation. Mediates liquid packing of actin filaments that is necessary for stereocilia to grow to their proper dimensions. The protein is Plastin-1 (Pls1) of Mus musculus (Mouse).